Here is a 420-residue protein sequence, read N- to C-terminus: Serine hydroxymethyltransferase (420 aa).

(6S)-5,6,7,8-tetrahydrofolate contacts are provided by residues L123 and 127–129 (GHL). K232 is modified (N6-(pyridoxal phosphate)lysine). 357 to 359 (SPF) serves as a coordination point for (6S)-5,6,7,8-tetrahydrofolate.

It belongs to the SHMT family. Homodimer. The cofactor is pyridoxal 5'-phosphate.

Its subcellular location is the cytoplasm. The enzyme catalyses (6R)-5,10-methylene-5,6,7,8-tetrahydrofolate + glycine + H2O = (6S)-5,6,7,8-tetrahydrofolate + L-serine. It functions in the pathway one-carbon metabolism; tetrahydrofolate interconversion. Its pathway is amino-acid biosynthesis; glycine biosynthesis; glycine from L-serine: step 1/1. Its function is as follows. Catalyzes the reversible interconversion of serine and glycine with tetrahydrofolate (THF) serving as the one-carbon carrier. This reaction serves as the major source of one-carbon groups required for the biosynthesis of purines, thymidylate, methionine, and other important biomolecules. Also exhibits THF-independent aldolase activity toward beta-hydroxyamino acids, producing glycine and aldehydes, via a retro-aldol mechanism. This chain is Serine hydroxymethyltransferase, found in Streptococcus pyogenes serotype M4 (strain MGAS10750).